Consider the following 146-residue polypeptide: Hemoglobin subunit beta (146 aa).

The 145-residue stretch at 2–146 folds into the Globin domain; that stretch reads HWTAEEKQLI…VAHALARKYH (145 aa). 2 residues coordinate heme b: His-63 and His-92.

It belongs to the globin family. In terms of assembly, heterotetramer of two alpha chains and two beta chains. As to expression, red blood cells.

Its function is as follows. Involved in oxygen transport from the lung to the various peripheral tissues. This chain is Hemoglobin subunit beta (HBB), found in Ara ararauna (Blue-and-yellow macaw).